The sequence spans 352 residues: Fe(3+) ions import ATP-binding protein FbpC 1 (352 aa).

An ABC transporter domain is found at Val-11–Met-241. Gly-43–Thr-50 serves as a coordination point for ATP.

Belongs to the ABC transporter superfamily. Fe(3+) ion importer (TC 3.A.1.10) family. In terms of assembly, the complex is composed of two ATP-binding proteins (FbpC), two transmembrane proteins (FbpB) and a solute-binding protein (FbpA).

It localises to the cell inner membrane. The catalysed reaction is Fe(3+)(out) + ATP + H2O = Fe(3+)(in) + ADP + phosphate + H(+). In terms of biological role, part of the ABC transporter complex FbpABC involved in Fe(3+) ions import. Responsible for energy coupling to the transport system. This Pectobacterium atrosepticum (strain SCRI 1043 / ATCC BAA-672) (Erwinia carotovora subsp. atroseptica) protein is Fe(3+) ions import ATP-binding protein FbpC 1.